A 1132-amino-acid polypeptide reads, in one-letter code: Protein sel-1 homolog 3 (1132 aa).

Residues 1–24 (MQRRGAGLGWPRQQQQQPPPLAVG) are disordered. N201, N382, and N527 each carry an N-linked (GlcNAc...) asparagine glycan. Sel1-like repeat units follow at residues 575 to 609 (YLAVFYETGLNVPRDQLQGMLYSLVGGQGSERLSS), 611 to 647 (NLGYKHYQGIDNYPLDWELSYAYYSNIATKTPLDQHT), 694 to 730 (RLAQMLFWGQQGVAKNPEAAIEWYAKGALETEDPALI), 732 to 767 (DYAIVLFKGQGVKKNRRLALELMKKAASKGLHQAVN), 768 to 800 (GLGWYYHKFKKNYAKAAKYWLKAEEMGNPDASY), 801 to 839 (NLGVLHLDGIFPGVPGRNQTLAGEYFHKAAQGGHMEGTL), and 840 to 877 (WCSLYYITGNLETFPRDPEKAVVWAKHVAEKNGYLGHV). S608 is subject to Phosphoserine. Residue N937 is glycosylated (N-linked (GlcNAc...) asparagine). A Sel1-like 8 repeat occupies 952–988 (KMGDLYYYGHQNQSQDLELSVQMYAQAALDGDSQGFF). The helical transmembrane segment at 1057–1077 (ILHSALIYFLGTFLLSILIAW) threads the bilayer. A disordered region spans residues 1087-1132 (ASDPPPRPSQASPDTATSTASPAVTPAADASDQDQPTVTNNPEPRG). Over residues 1097 to 1116 (ASPDTATSTASPAVTPAADA) the composition is skewed to low complexity. The span at 1119 to 1132 (QDQPTVTNNPEPRG) shows a compositional bias: polar residues.

The protein resides in the membrane. This is Protein sel-1 homolog 3 (SEL1L3) from Homo sapiens (Human).